We begin with the raw amino-acid sequence, 469 residues long: Putative F-box/LRR-repeat protein At5g02930 (469 aa).

The F-box domain maps to 27 to 77 (VDSISDLPDAVLQHIFSYIPTELAIRTSVLSKRWRHVWSETPHLSFEWLKV). LRR repeat units lie at residues 30–58 (ISDL…VLSK), 178–203 (DCTM…SLKF), 204–214 (CMSLKYLNLSK), 223–250 (IERI…RLRD), 296–321 (TMLK…SLSK), and 341–366 (IIRS…TVYT).

This Arabidopsis thaliana (Mouse-ear cress) protein is Putative F-box/LRR-repeat protein At5g02930.